Consider the following 276-residue polypeptide: Kallikrein-11 (276 aa).

A signal peptide spans M1 to G44. Positions E45 to R47 are cleaved as a propeptide — activation peptide. In terms of domain architecture, Peptidase S1 spans I48–R274. Cystine bridges form between C54–C189, C73–C89, C168–C235, C200–C214, and C225–C250. H88 acts as the Charge relay system in catalysis. The N-linked (GlcNAc...) asparagine glycan is linked to N125. D136 (charge relay system) is an active-site residue. N-linked (GlcNAc...) asparagine glycans are attached at residues N191 and N207. The Charge relay system role is filled by S229. N236 carries N-linked (GlcNAc...) asparagine glycosylation.

This sequence belongs to the peptidase S1 family. Kallikrein subfamily. Expressed in brain and prostate (isoform 1) and prostate (isoform 2).

The protein resides in the secreted. Functionally, possible multifunctional protease. Efficiently cleaves 'bz-Phe-Arg-4-methylcoumaryl-7-amide', a kallikrein substrate, and weakly cleaves other substrates for kallikrein and trypsin. This Mus musculus (Mouse) protein is Kallikrein-11 (Klk11).